The primary structure comprises 228 residues: L-ribulose-5-phosphate 4-epimerase UlaF (228 aa).

Substrate is bound by residues 26 to 27, 43 to 44, and 72 to 73; these read GN, SG, and SS. The Zn(2+) site is built by D74, H93, and H95. The active-site Proton donor/acceptor is the D118. H167 lines the Zn(2+) pocket. The active-site Proton donor/acceptor is Y225.

This sequence belongs to the aldolase class II family. AraD/FucA subfamily. The cofactor is Zn(2+).

It carries out the reaction L-ribulose 5-phosphate = D-xylulose 5-phosphate. It participates in cofactor degradation; L-ascorbate degradation; D-xylulose 5-phosphate from L-ascorbate: step 4/4. In terms of biological role, catalyzes the isomerization of L-ribulose 5-phosphate to D-xylulose 5-phosphate. Is involved in the anaerobic L-ascorbate utilization. The protein is L-ribulose-5-phosphate 4-epimerase UlaF of Shigella dysenteriae serotype 1 (strain Sd197).